The primary structure comprises 273 residues: MSQPILVFDSGIGGLSVLAEIRKRLPHHDYCYVFDNARLPYGELEEQELVSGCVALISQLVERTHACIVVVACNTASTVVLPALRAKLHIPVVGVVPAIKPAALLSKSKRIGLLATPGTVKRHYTHELISQFADDCHVELFGCSELVMMAEHKIATGQLGIARLTQILSPVVDANLDVLVLGCTHFPMLRDELQQVLGLGVTLLDSGAAIAKRVDTLLAHGKNISHNSEYERNGSLMRAFYTKAEITEGLATTLADCGFSTLERITTINSNSD.

Substrate contacts are provided by residues 9–10 (DS) and 41–42 (YG). C73 serves as the catalytic Proton donor/acceptor. 74-75 (NT) contacts substrate. The active-site Proton donor/acceptor is C183. Position 184-185 (184-185 (TH)) interacts with substrate.

This sequence belongs to the aspartate/glutamate racemases family.

The enzyme catalyses L-glutamate = D-glutamate. Its pathway is cell wall biogenesis; peptidoglycan biosynthesis. Its function is as follows. Provides the (R)-glutamate required for cell wall biosynthesis. This Shewanella oneidensis (strain ATCC 700550 / JCM 31522 / CIP 106686 / LMG 19005 / NCIMB 14063 / MR-1) protein is Glutamate racemase.